We begin with the raw amino-acid sequence, 71 residues long: Omega-conotoxin-like CnVIIF (71 aa).

Disulfide bonds link Cys-46-Cys-61, Cys-53-Cys-65, and Cys-60-Cys-70. A Cysteine amide; in CnVIID modification is found at Cys-70.

It belongs to the conotoxin M superfamily. In terms of tissue distribution, expressed by the venom duct.

Its subcellular location is the secreted. Omega-conotoxins act at presynaptic membranes, they bind and block voltage-gated calcium channels (Cav). The chain is Omega-conotoxin-like CnVIIF from Conus consors (Singed cone).